Consider the following 614-residue polypeptide: Dihydroxy-acid dehydratase (614 aa).

Aspartate 81 contributes to the Mg(2+) binding site. Cysteine 122 contacts [2Fe-2S] cluster. Mg(2+) contacts are provided by aspartate 123 and lysine 124. Lysine 124 is modified (N6-carboxylysine). Residue cysteine 195 coordinates [2Fe-2S] cluster. Mg(2+) is bound at residue glutamate 491. Catalysis depends on serine 517, which acts as the Proton acceptor.

The protein belongs to the IlvD/Edd family. Homodimer. It depends on [2Fe-2S] cluster as a cofactor. The cofactor is Mg(2+).

It carries out the reaction (2R)-2,3-dihydroxy-3-methylbutanoate = 3-methyl-2-oxobutanoate + H2O. It catalyses the reaction (2R,3R)-2,3-dihydroxy-3-methylpentanoate = (S)-3-methyl-2-oxopentanoate + H2O. It functions in the pathway amino-acid biosynthesis; L-isoleucine biosynthesis; L-isoleucine from 2-oxobutanoate: step 3/4. The protein operates within amino-acid biosynthesis; L-valine biosynthesis; L-valine from pyruvate: step 3/4. Functions in the biosynthesis of branched-chain amino acids. Catalyzes the dehydration of (2R,3R)-2,3-dihydroxy-3-methylpentanoate (2,3-dihydroxy-3-methylvalerate) into 2-oxo-3-methylpentanoate (2-oxo-3-methylvalerate) and of (2R)-2,3-dihydroxy-3-methylbutanoate (2,3-dihydroxyisovalerate) into 2-oxo-3-methylbutanoate (2-oxoisovalerate), the penultimate precursor to L-isoleucine and L-valine, respectively. This is Dihydroxy-acid dehydratase from Rhodopseudomonas palustris (strain BisA53).